A 224-amino-acid polypeptide reads, in one-letter code: Toxin coregulated pilin (224 aa).

Residues Met-1–Gly-25 constitute a propeptide, atypical leader sequence. An N-methylmethionine modification is found at Met-26. A helical transmembrane segment spans residues Met-26–Val-46. Cys-145 and Cys-211 form a disulfide bridge.

The protein resides in the fimbrium. It localises to the membrane. Functionally, major component of the toxin co-regulated pilus (tcp) which is a type IV pilus essential for bacterial aggregation and subsequent colonization in the host small intestine. This chain is Toxin coregulated pilin (tcpA), found in Vibrio cholerae serotype O1 (strain ATCC 39315 / El Tor Inaba N16961).